We begin with the raw amino-acid sequence, 540 residues long: Signal peptide peptidase-like 3 (540 aa).

Positions M1–A28 are cleaved as a signal peptide. Residues D29–D194 are Lumenal-facing. The region spanning S98–N172 is the PA domain. N155 and N172 each carry an N-linked (GlcNAc...) asparagine glycan. The helical transmembrane segment at L195–S215 threads the bilayer. Over E216 to D250 the chain is Cytoplasmic. Residues I251–F273 traverse the membrane as a helical segment. The Lumenal segment spans residues M274 to S276. A helical transmembrane segment spans residues W277 to M299. Topologically, residues A300–T321 are cytoplasmic. A helical membrane pass occupies residues M322–I342. At K343–S347 the chain is on the lumenal side. The helical transmembrane segment at Y348–V368 threads the bilayer. Topologically, residues R369–T377 are cytoplasmic. Residues V378–F398 form a helical membrane-spanning segment. Residue D387 is part of the active site. Over H399–P429 the chain is Lumenal. Residues W430–F450 traverse the membrane as a helical segment. D440 is a catalytic residue. Topologically, residues A451 to Y466 are cytoplasmic. The chain crosses the membrane as a helical span at residues F467–L487. Residues M488 to G492 lie on the Lumenal side of the membrane. A helical membrane pass occupies residues Q493–V513. The PAL signature appears at P494–L496. Topologically, residues R514 to A540 are cytoplasmic.

The protein belongs to the peptidase A22B family. Glycosylated. Ubiquitous.

The protein resides in the endosome membrane. Intramembrane-cleaving aspartic protease (I-CLiP) that cleaves type II membrane signal peptides in the hydrophobic plane of the membrane. The polypeptide is Signal peptide peptidase-like 3 (SPPL3) (Arabidopsis thaliana (Mouse-ear cress)).